The following is a 109-amino-acid chain: Large ribosomal subunit protein uL22 (109 aa).

This sequence belongs to the universal ribosomal protein uL22 family. Part of the 50S ribosomal subunit.

Its function is as follows. This protein binds specifically to 23S rRNA; its binding is stimulated by other ribosomal proteins, e.g. L4, L17, and L20. It is important during the early stages of 50S assembly. It makes multiple contacts with different domains of the 23S rRNA in the assembled 50S subunit and ribosome. In terms of biological role, the globular domain of the protein is located near the polypeptide exit tunnel on the outside of the subunit, while an extended beta-hairpin is found that lines the wall of the exit tunnel in the center of the 70S ribosome. This chain is Large ribosomal subunit protein uL22, found in Bordetella petrii (strain ATCC BAA-461 / DSM 12804 / CCUG 43448).